A 128-amino-acid chain; its full sequence is Holin-like protein CidA (128 aa).

Transmembrane regions (helical) follow at residues 4–24 (LLLT…INWV), 26–46 (ALLH…FTLL), 59–79 (GAAW…VGVI), and 88–108 (FGVS…VSTG).

It belongs to the CidA/LrgA family. CidA subfamily.

The protein resides in the cell membrane. Increases the activity of extracellular murein hydrolases possibly by mediating their export via hole formation. Inhibited by the antiholin-like proteins LrgAB. In an unstressed cell, the LrgAB products probably inhibit the function of the CidA protein. When a cell is stressed by the addition of antibiotics or by other factors in the environment, CidA possibly oligomerizes within the bacterial cell membrane, creating lesions that disrupt the proton motive force, which in turn results in loss of cell viability. These lesions are also hypothesized to regulate the subsequent cell lysis by either allowing the murein hydrolases access to the cell wall substrate and/or regulating their activity by a possible change in the cell wall pH that results from loss of membrane potential. The chain is Holin-like protein CidA from Bacillus subtilis (strain 168).